The following is a 372-amino-acid chain: Cyclin-J (372 aa).

One can recognise a Cyclin N-terminal domain in the interval 15-143 (DIHQALRYKE…LLETFQWNLC (129 aa)).

Belongs to the cyclin family.

The sequence is that of Cyclin-J (CCNJ) from Homo sapiens (Human).